We begin with the raw amino-acid sequence, 257 residues long: Imidazole glycerol phosphate synthase subunit HisF (257 aa).

Residues Asp11 and Asp130 contribute to the active site.

This sequence belongs to the HisA/HisF family. In terms of assembly, heterodimer of HisH and HisF.

It localises to the cytoplasm. The catalysed reaction is 5-[(5-phospho-1-deoxy-D-ribulos-1-ylimino)methylamino]-1-(5-phospho-beta-D-ribosyl)imidazole-4-carboxamide + L-glutamine = D-erythro-1-(imidazol-4-yl)glycerol 3-phosphate + 5-amino-1-(5-phospho-beta-D-ribosyl)imidazole-4-carboxamide + L-glutamate + H(+). Its pathway is amino-acid biosynthesis; L-histidine biosynthesis; L-histidine from 5-phospho-alpha-D-ribose 1-diphosphate: step 5/9. In terms of biological role, IGPS catalyzes the conversion of PRFAR and glutamine to IGP, AICAR and glutamate. The HisF subunit catalyzes the cyclization activity that produces IGP and AICAR from PRFAR using the ammonia provided by the HisH subunit. The protein is Imidazole glycerol phosphate synthase subunit HisF of Aliivibrio fischeri (strain MJ11) (Vibrio fischeri).